The chain runs to 880 residues: DNA mismatch repair protein MutS (880 aa).

ATP is bound at residue 631–638; it reads GPNMAGKS. The tract at residues 835 to 860 is disordered; sequence RAAPPPPAPAAPKTSPVEERLREIQP. The segment covering 850–860 has biased composition (basic and acidic residues); the sequence is PVEERLREIQP.

Belongs to the DNA mismatch repair MutS family.

Functionally, this protein is involved in the repair of mismatches in DNA. It is possible that it carries out the mismatch recognition step. This protein has a weak ATPase activity. The protein is DNA mismatch repair protein MutS of Cereibacter sphaeroides (strain ATCC 17029 / ATH 2.4.9) (Rhodobacter sphaeroides).